The following is a 345-amino-acid chain: S-adenosylmethionine:tRNA ribosyltransferase-isomerase (345 aa).

This sequence belongs to the QueA family. In terms of assembly, monomer.

It is found in the cytoplasm. It catalyses the reaction 7-aminomethyl-7-carbaguanosine(34) in tRNA + S-adenosyl-L-methionine = epoxyqueuosine(34) in tRNA + adenine + L-methionine + 2 H(+). It participates in tRNA modification; tRNA-queuosine biosynthesis. In terms of biological role, transfers and isomerizes the ribose moiety from AdoMet to the 7-aminomethyl group of 7-deazaguanine (preQ1-tRNA) to give epoxyqueuosine (oQ-tRNA). The protein is S-adenosylmethionine:tRNA ribosyltransferase-isomerase of Shewanella baltica (strain OS155 / ATCC BAA-1091).